A 251-amino-acid chain; its full sequence is Fibroblast growth factor 23 (251 aa).

Residues 1-24 (MLGACLRLLVGALCTVCSLGTARA) form the signal peptide. A disulfide bridge links C95 with C113. O-linked (GalNAc) threonine glycans are attached at residues T171 and T178. The segment at 175-251 (RRHTRSAEDP…DRCRPFPRFV (77 aa)) is disordered. Residues 179-189 (RSAEDPPERDP) show a composition bias toward basic and acidic residues. S180 carries the post-translational modification Phosphoserine; by FAM20C.

The protein belongs to the heparin-binding growth factors family. In terms of assembly, interacts with FGFR1, FGFR2, FGFR3 and FGFR4. Affinity between fibroblast growth factors (FGFs) and their receptors is increased by KL and heparan sulfate glycosaminoglycans that function as coreceptors. Following secretion this protein is inactivated by cleavage into a N-terminal fragment and a C-terminal fragment. The processing is effected by proprotein convertases. Post-translationally, O-glycosylated at Thr-171 and Thr-178 by GALNT3 and glycosylation of Thr-178 requires previous glycosylation at Thr171. Glycosylation is necessary for secretion; it blocks processing by proprotein convertases when the O-glycan is alpha 2,6-sialylated. Competition between proprotein convertase cleavage and block of cleavage by O-glycosylation determines the level of secreted active FGF23. In terms of processing, phosphorylation at Ser-180 mediated by FAM20C slows down glycosylation at Thr-178 notably. As to expression, expressed in the parathyroid.

The protein resides in the secreted. Its function is as follows. Regulator of phosphate homeostasis. Inhibits renal tubular phosphate transport by reducing SLC34A1 levels. Regulator of vitamin-D metabolism. Negatively regulates osteoblasts differentiation and matrix mineralization. Acts directly on the parathyroid to decrease PTH secretion. Up-regulates EGR1 expression in the presence of KL. This chain is Fibroblast growth factor 23 (Fgf23), found in Rattus norvegicus (Rat).